The sequence spans 229 residues: Uracil-DNA glycosylase (229 aa).

Asp-72 acts as the Proton acceptor in catalysis.

The protein belongs to the uracil-DNA glycosylase (UDG) superfamily. UNG family.

Its subcellular location is the cytoplasm. The enzyme catalyses Hydrolyzes single-stranded DNA or mismatched double-stranded DNA and polynucleotides, releasing free uracil.. Functionally, excises uracil residues from the DNA which can arise as a result of misincorporation of dUMP residues by DNA polymerase or due to deamination of cytosine. The protein is Uracil-DNA glycosylase of Dichelobacter nodosus (strain VCS1703A).